Reading from the N-terminus, the 756-residue chain is Cilium assembly protein DZIP1L (756 aa).

Residues 1-20 are disordered; it reads MLGQFSPGEPYTTSLSSTPP. Residues 10–19 are compositionally biased toward low complexity; the sequence is PYTTSLSSTP. Positions 108 to 158 form a coiled coil; sequence DFLSSQLAGLEERLQAATSLVQQGEGQRAELEKSLQETKQENRRRKQLIAT. Residues 171 to 194 form a C2H2-type zinc finger; the sequence is HKCQFCEKSFVNYSYLQAHVQRRH. 4 stretches are compositionally biased toward basic and acidic residues: residues 193 to 202, 237 to 262, 319 to 335, and 344 to 365; these read RHPEVTDAEK, NLRR…ERWK, DPEK…LRER, and RRKF…KSEN. 6 disordered regions span residues 193–212, 233–262, 310–365, 409–466, 531–626, and 693–756; these read RHPE…EEME, QQAD…ERWK, NNAS…KSEN, KIKK…MRES, VKSL…AYIT, and IKTP…GTSA. 2 coiled-coil regions span residues 196–283 and 321–416; these read EVTD…FLQE and EKEM…LSAT. The segment covering 534–558 has biased composition (polar residues); that stretch reads LQKSSGKPTPNTLKQRGKKTSTPLN. Residues 560-578 show a composition bias toward basic and acidic residues; it reads KSLRFRQDSKASDRREKSQ. A compositionally biased stretch (pro residues) spans 586 to 598; that stretch reads TPTPRSKAPPPNQ.

Belongs to the DZIP C2H2-type zinc-finger protein family.

It is found in the cytoplasm. It localises to the cytoskeleton. The protein resides in the cilium basal body. The protein localises to the microtubule organizing center. Its subcellular location is the centrosome. It is found in the centriole. Its function is as follows. Involved in primary cilium formation. Probably acts as a transition zone protein required for localization of PKD1/PC1 and PKD2/PC2 to the ciliary membrane. The chain is Cilium assembly protein DZIP1L (dzip1l) from Danio rerio (Zebrafish).